The chain runs to 142 residues: uncharacterized protein (142 aa).

The helical transmembrane segment at 75–91 threads the bilayer; the sequence is YAAILAQVSFAFLCTGF.

The protein resides in the membrane. This is an uncharacterized protein from Haemophilus influenzae (strain ATCC 51907 / DSM 11121 / KW20 / Rd).